Here is a 230-residue protein sequence, read N- to C-terminus: Thymidylate kinase (230 aa).

Residue 20–27 participates in ATP binding; that stretch reads GGEGSGKS.

It belongs to the thymidylate kinase family.

It carries out the reaction dTMP + ATP = dTDP + ADP. In terms of biological role, phosphorylation of dTMP to form dTDP in both de novo and salvage pathways of dTTP synthesis. The chain is Thymidylate kinase from Nitrobacter hamburgensis (strain DSM 10229 / NCIMB 13809 / X14).